A 372-amino-acid chain; its full sequence is Germination protease (372 aa).

A propeptide spanning residues M1–D15 is cleaved from the precursor.

Belongs to the peptidase A25 family. In terms of assembly, homotetramer. In terms of processing, autoproteolytically processed. The inactive tetrameric zymogen termed p46 autoprocesses to a smaller form termed p41, which is active only during spore germination.

It catalyses the reaction Endopeptidase action with P4 Glu or Asp, P1 preferably Glu &gt; Asp, P1' hydrophobic and P2' Ala.. Functionally, initiates the rapid degradation of small, acid-soluble proteins during spore germination. This is Germination protease from Halalkalibacterium halodurans (strain ATCC BAA-125 / DSM 18197 / FERM 7344 / JCM 9153 / C-125) (Bacillus halodurans).